The sequence spans 461 residues: Cysteine--tRNA ligase (461 aa).

Cysteine 28 serves as a coordination point for Zn(2+). A 'HIGH' region motif is present at residues isoleucine 30–histidine 40. Residues cysteine 209, histidine 234, and glutamate 238 each contribute to the Zn(2+) site. The 'KMSKS' region signature appears at lysine 266–serine 270. Lysine 269 lines the ATP pocket.

This sequence belongs to the class-I aminoacyl-tRNA synthetase family. Monomer. The cofactor is Zn(2+).

Its subcellular location is the cytoplasm. It carries out the reaction tRNA(Cys) + L-cysteine + ATP = L-cysteinyl-tRNA(Cys) + AMP + diphosphate. The chain is Cysteine--tRNA ligase from Escherichia coli O17:K52:H18 (strain UMN026 / ExPEC).